A 314-amino-acid chain; its full sequence is Tyrosine recombinase XerC (314 aa).

The Core-binding (CB) domain occupies 1–85; it reads MNEQVEAFLR…AVKSFFTFLT (85 aa). The region spanning 106-291 is the Tyr recombinase domain; that stretch reads DLPRALTPRQ…NHESSHTPHA (186 aa). Residues arginine 147, lysine 171, histidine 243, arginine 246, and histidine 269 contribute to the active site. Tyrosine 278 acts as the O-(3'-phospho-DNA)-tyrosine intermediate in catalysis. The disordered stretch occupies residues 284-314; that stretch reads ESSHTPHAHPAPRASEVNGVRDEQALVPEEK. Basic and acidic residues predominate over residues 302 to 314; sequence GVRDEQALVPEEK.

This sequence belongs to the 'phage' integrase family. XerC subfamily. As to quaternary structure, forms a cyclic heterotetrameric complex composed of two molecules of XerC and two molecules of XerD.

It localises to the cytoplasm. In terms of biological role, site-specific tyrosine recombinase, which acts by catalyzing the cutting and rejoining of the recombining DNA molecules. The XerC-XerD complex is essential to convert dimers of the bacterial chromosome into monomers to permit their segregation at cell division. It also contributes to the segregational stability of plasmids. In Roseiflexus castenholzii (strain DSM 13941 / HLO8), this protein is Tyrosine recombinase XerC.